Consider the following 422-residue polypeptide: 3-carboxy-cis,cis-muconate cycloisomerase (422 aa).

This sequence belongs to the class-II fumarase/aspartase family. As to quaternary structure, homotetramer.

The protein localises to the cytoplasm. It carries out the reaction 2-(carboxymethyl)-5-oxo-2,5-dihydro-2-furoate = 3-carboxy-cis,cis-muconate + H(+). It functions in the pathway aromatic compound metabolism; beta-ketoadipate pathway; 5-oxo-4,5-dihydro-2-furylacetate from 3-carboxy-cis,cis-muconate: step 1/2. Functionally, catalyzes an anti cycloisomerization. The chain is 3-carboxy-cis,cis-muconate cycloisomerase (pcaB) from Pseudomonas putida (Arthrobacter siderocapsulatus).